Reading from the N-terminus, the 449-residue chain is NADH-quinone oxidoreductase subunit H (449 aa).

9 helical membrane passes run 29–49 (ILLKAVAVFAFLLLMTLFAIV), 96–116 (PIFILAPIVSAVPAFLAFAVI), 136–156 (LPVSVLYLLAAASLGVYGLIL), 177–197 (IISYEVAMGLAFVAVFIYAGT), 211–231 (WYIVLVPSFVLYCISMVGETN), 259–279 (FFFLAEYINMVTVSAIATTLF), 298–318 (WVPLIWFVLKLLAFLFFFIWL), 330–350 (FMSFGWKVLIPVGLVWVLAVA), and 365–385 (WLVGFGVVVGILLIVALIDPG). The segment covering 393-402 (LEEAEQRKLA) has biased composition (basic and acidic residues). The tract at residues 393-449 (LEEAEQRKLAEAPSLDRIPWPPPPQAAGRGRPAVSAGASANGSSTVIPADPGPRQER) is disordered. Residues 418-436 (AAGRGRPAVSAGASANGSS) show a composition bias toward low complexity.

It belongs to the complex I subunit 1 family. In terms of assembly, NDH-1 is composed of 14 different subunits. Subunits NuoA, H, J, K, L, M, N constitute the membrane sector of the complex.

Its subcellular location is the cell membrane. It catalyses the reaction a quinone + NADH + 5 H(+)(in) = a quinol + NAD(+) + 4 H(+)(out). Its function is as follows. NDH-1 shuttles electrons from NADH, via FMN and iron-sulfur (Fe-S) centers, to quinones in the respiratory chain. The immediate electron acceptor for the enzyme in this species is believed to be ubiquinone. Couples the redox reaction to proton translocation (for every two electrons transferred, four hydrogen ions are translocated across the cytoplasmic membrane), and thus conserves the redox energy in a proton gradient. This subunit may bind ubiquinone. This is NADH-quinone oxidoreductase subunit H from Frankia casuarinae (strain DSM 45818 / CECT 9043 / HFP020203 / CcI3).